Here is a 96-residue protein sequence, read N- to C-terminus: Co-chaperonin GroES (96 aa).

The protein belongs to the GroES chaperonin family. Heptamer of 7 subunits arranged in a ring. Interacts with the chaperonin GroEL.

The protein localises to the cytoplasm. Together with the chaperonin GroEL, plays an essential role in assisting protein folding. The GroEL-GroES system forms a nano-cage that allows encapsulation of the non-native substrate proteins and provides a physical environment optimized to promote and accelerate protein folding. GroES binds to the apical surface of the GroEL ring, thereby capping the opening of the GroEL channel. In Tremblaya princeps, this protein is Co-chaperonin GroES.